A 236-amino-acid chain; its full sequence is Ubiquinone biosynthesis O-methyltransferase (236 aa).

Positions 36, 56, 77, and 125 each coordinate S-adenosyl-L-methionine.

The protein belongs to the methyltransferase superfamily. UbiG/COQ3 family.

The catalysed reaction is a 3-demethylubiquinol + S-adenosyl-L-methionine = a ubiquinol + S-adenosyl-L-homocysteine + H(+). It catalyses the reaction a 3-(all-trans-polyprenyl)benzene-1,2-diol + S-adenosyl-L-methionine = a 2-methoxy-6-(all-trans-polyprenyl)phenol + S-adenosyl-L-homocysteine + H(+). Its pathway is cofactor biosynthesis; ubiquinone biosynthesis. Its function is as follows. O-methyltransferase that catalyzes the 2 O-methylation steps in the ubiquinone biosynthetic pathway. The polypeptide is Ubiquinone biosynthesis O-methyltransferase (Haemophilus ducreyi (strain 35000HP / ATCC 700724)).